Reading from the N-terminus, the 248-residue chain is 4-hydroxy-tetrahydrodipicolinate reductase (248 aa).

13–18 is a binding site for NAD(+); the sequence is GITGRL. Arginine 36 contributes to the NADP(+) binding site. NAD(+) is bound by residues 84–86 and 108–111; these read GTT and AANF. Histidine 140 (proton donor/acceptor) is an active-site residue. Residue histidine 141 participates in (S)-2,3,4,5-tetrahydrodipicolinate binding. Catalysis depends on lysine 144, which acts as the Proton donor. 150–151 contributes to the (S)-2,3,4,5-tetrahydrodipicolinate binding site; the sequence is GT.

Belongs to the DapB family.

It is found in the cytoplasm. It carries out the reaction (S)-2,3,4,5-tetrahydrodipicolinate + NAD(+) + H2O = (2S,4S)-4-hydroxy-2,3,4,5-tetrahydrodipicolinate + NADH + H(+). It catalyses the reaction (S)-2,3,4,5-tetrahydrodipicolinate + NADP(+) + H2O = (2S,4S)-4-hydroxy-2,3,4,5-tetrahydrodipicolinate + NADPH + H(+). Its pathway is amino-acid biosynthesis; L-lysine biosynthesis via DAP pathway; (S)-tetrahydrodipicolinate from L-aspartate: step 4/4. Functionally, catalyzes the conversion of 4-hydroxy-tetrahydrodipicolinate (HTPA) to tetrahydrodipicolinate. This Gluconobacter oxydans (strain 621H) (Gluconobacter suboxydans) protein is 4-hydroxy-tetrahydrodipicolinate reductase.